A 351-amino-acid polypeptide reads, in one-letter code: High-affinity nickel transport protein (351 aa).

At 1 to 19 (MFQLLAGVRMNSTGRPRAK) the chain is on the cytoplasmic side. The helical transmembrane segment at 20-40 (IILLYALLIAFNIGAWLCALA) threads the bilayer. The Periplasmic portion of the chain corresponds to 41-51 (AFRDHPVLLGT). The helical transmembrane segment at 52–72 (ALLAYGLGLRHAVDADHLAAI) threads the bilayer. Topologically, residues 73–94 (DNVTRKLMQDGRRPITAGLWFS) are cytoplasmic. A helical membrane pass occupies residues 95–115 (LGHSSVVVLASVLIAVMATTL). The Periplasmic segment spans residues 116–128 (QERLDAFHEVGSV). A helical transmembrane segment spans residues 129 to 149 (IGTLASALFLFAIAAINLVIL). Residues 150–199 (RSAYRAFRRVRRGGIYVEEDFDLLFGNRGFLARIFRPLFRFITRSWHMYP) lie on the Cytoplasmic side of the membrane. The helical transmembrane segment at 200-220 (LGMLFALGFDTATEVALLGIS) threads the bilayer. Over 221–243 (TMEASRGVPIWSILVFPALFTAG) the chain is Periplasmic. The helical transmembrane segment at 244–264 (MALIDTIDSILMCGAYAWAYA) threads the bilayer. Over 265–269 (KPVRK) the chain is Cytoplasmic. A helical transmembrane segment spans residues 270-290 (LYYNMTITFVSAIVALIVGGI). Over 291-316 (ETLGLLADKFMLKGVFWNAVGALNEN) the chain is Periplasmic. The chain crosses the membrane as a helical span at residues 317–337 (FCQLGFVIIGIFTVCWVVSIV). Topologically, residues 338–351 (VYRLRRYDDSEVRA) are cytoplasmic.

It belongs to the NiCoT transporter (TC 2.A.52) family.

The protein resides in the cell inner membrane. Its function is as follows. High-affinity nickel transporter responsible for nickel uptake. Necessary for high levels of activity of hydrogenase and urease. Does not transport cobalt. The protein is High-affinity nickel transport protein (hoxN) of Cupriavidus necator (strain ATCC 17699 / DSM 428 / KCTC 22496 / NCIMB 10442 / H16 / Stanier 337) (Ralstonia eutropha).